The primary structure comprises 85 residues: Cell division topological specificity factor (85 aa).

Belongs to the MinE family.

Prevents the cell division inhibition by proteins MinC and MinD at internal division sites while permitting inhibition at polar sites. This ensures cell division at the proper site by restricting the formation of a division septum at the midpoint of the long axis of the cell. This chain is Cell division topological specificity factor, found in Cellvibrio japonicus (strain Ueda107) (Pseudomonas fluorescens subsp. cellulosa).